The primary structure comprises 99 residues: Aspartyl/glutamyl-tRNA(Asn/Gln) amidotransferase subunit C (99 aa).

The protein belongs to the GatC family. In terms of assembly, heterotrimer of A, B and C subunits.

The catalysed reaction is L-glutamyl-tRNA(Gln) + L-glutamine + ATP + H2O = L-glutaminyl-tRNA(Gln) + L-glutamate + ADP + phosphate + H(+). It catalyses the reaction L-aspartyl-tRNA(Asn) + L-glutamine + ATP + H2O = L-asparaginyl-tRNA(Asn) + L-glutamate + ADP + phosphate + 2 H(+). Its function is as follows. Allows the formation of correctly charged Asn-tRNA(Asn) or Gln-tRNA(Gln) through the transamidation of misacylated Asp-tRNA(Asn) or Glu-tRNA(Gln) in organisms which lack either or both of asparaginyl-tRNA or glutaminyl-tRNA synthetases. The reaction takes place in the presence of glutamine and ATP through an activated phospho-Asp-tRNA(Asn) or phospho-Glu-tRNA(Gln). This is Aspartyl/glutamyl-tRNA(Asn/Gln) amidotransferase subunit C from Burkholderia lata (strain ATCC 17760 / DSM 23089 / LMG 22485 / NCIMB 9086 / R18194 / 383).